We begin with the raw amino-acid sequence, 349 residues long: DCD domain-containing protein NRP (349 aa).

The segment at 157 to 201 (NNNKNKGIDEDHQIQKGGKKNRKNQQNNNNQRNEDDKNNGLDKRF) is disordered. Basic and acidic residues predominate over residues 188-201 (RNEDDKNNGLDKRF). In terms of domain architecture, DCD spans 214–346 (ETIGGYIFVC…VLSLLDIFAD (133 aa)).

As to quaternary structure, interacts with CRY2 in the cytoplasm. Interacts with Verticillium dahliae PevD1. Interacts with FYPP3. Highly expressed in sensecent leaves, cauline leaves and sepals. Expressed in the shoot apical meristem, leaf veins, central cylinder, root hair zone, root tips, rosette leaves, flowers and siliques.

The protein resides in the cytoplasm. Contributes to the initial phase of responses to abiotic and biotic stress signals. Binds FYPP3 and facilitates FYPP3 degradation to promote abscisic acid (ABA) response. The chain is DCD domain-containing protein NRP from Arabidopsis thaliana (Mouse-ear cress).